The sequence spans 978 residues: Regulator of telomere elongation helicase 1 homolog (978 aa).

A Helicase ATP-binding domain is found at 7-318; that stretch reads NGIPVNFPFE…EDDDAKKDFT (312 aa). 42 to 49 lines the ATP pocket; the sequence is SPTGTGKT. Residues Cys159, Cys177, Cys186, and Cys222 each coordinate [4Fe-4S] cluster. A DEAH box motif is present at residues 265-268; that stretch reads DEAH.

The protein belongs to the helicase family. RAD3/XPD subfamily.

The protein localises to the nucleus. The catalysed reaction is ATP + H2O = ADP + phosphate + H(+). Its function is as follows. A probable ATP-dependent DNA helicase implicated in DNA repair and the maintenance of genomic stability. Acts as an anti-recombinase to counteract toxic recombination and limit crossover during meiosis. Regulates meiotic recombination and crossover homeostasis by physically dissociating strand invasion events and thereby promotes noncrossover repair by meiotic synthesis dependent strand annealing (SDSA) as well as disassembly of D loop recombination intermediates. This chain is Regulator of telomere elongation helicase 1 homolog, found in Culex quinquefasciatus (Southern house mosquito).